A 340-amino-acid polypeptide reads, in one-letter code: Alcohol dehydrogenase (340 aa).

Zn(2+) is bound by residues C37, H58, C89, C92, C95, C103, and C145.

It belongs to the zinc-containing alcohol dehydrogenase family. Zn(2+) serves as cofactor.

It catalyses the reaction a primary alcohol + NAD(+) = an aldehyde + NADH + H(+). The catalysed reaction is a secondary alcohol + NAD(+) = a ketone + NADH + H(+). The protein is Alcohol dehydrogenase (adh) of Staphylococcus epidermidis (strain ATCC 35984 / DSM 28319 / BCRC 17069 / CCUG 31568 / BM 3577 / RP62A).